Here is a 765-residue protein sequence, read N- to C-terminus: MKTPWKVLLGLLGLAALITIITVPVVLLNKGNDAAADSRRTYTLTDYLKNTFRVKFYSLRWVSDHDYLYKQDNNILLFNAEYGNSSIFLENSTFDEFEHSINDYSVSPDGQFILLEYNYVKQWRHSYTASYDIYDLNKRQLITEEKIPNNTQWITWSPEGHKLAYVWKNDVYVKNEPNSSSHRITWTGEENAIYNGIADWVYEEEIFSAYSALWWSPKGTFLAYAQFNDTQVPLIEYSFYSDESLQYPMTMRIPYPKAGAANPTVKLFVIKTDNLNPNTNATSVEITPPAAMLTGDYYLCDVTWANEERISLQWLRRIQNYSVMDIRDYNNSTGKWISSAAQEHIEMSTTGWVGRFRPAEPHFTSDGRNFYKIISNEDGYKHICRFQIDKKDCTFITKGAWEVIGIEALTTDYLYYISNEYKGMPGGRNLYKIQLNDYTKVACLSCELKPERCQYYSVSFSKEAKYYQLRCSGPGLPLYTLHRSSNDEELRVLEDNSALDKMLQEVQMPSKKLDFIILNETKFWYQMILPPHFDTSKKYPLLIDVYAGPCSQKADAIFRLNWATYLASTENIIVASFDGRGSGYQGDKIMHAVNRRLGTFEVEDQIEAARQFSKMGFVDDKRIAIWGWSYGGYVTSMVLGAGSGVFKCGIAVAPVSRWEYYDSVYTERYMGLPTPQDNLDYYKNSTVMSRAENFKQVEYLLIHGTADDNVHFQQSAQISKALVDAGVDFQAMWYTDEDHGIASGPAHQHIYTHMSHFIKQCFSLP.

At 1–6 (MKTPWK) the chain is on the cytoplasmic side. The helical; Signal-anchor for type II membrane protein transmembrane segment at 7–29 (VLLGLLGLAALITIITVPVVLLN) threads the bilayer. Topologically, residues 30–765 (KGNDAAADSR…HFIKQCFSLP (736 aa)) are extracellular. Asn84, Asn91, Asn149, Asn178, Asn228, Asn280, Asn320, Asn330, and Asn331 each carry an N-linked (GlcNAc...) asparagine glycan. Cystine bridges form between Cys384-Cys393, Cys443-Cys446, and Cys453-Cys471. An N-linked (GlcNAc...) asparagine glycan is attached at Asn519. Catalysis depends on Ser629, which acts as the Charge relay system. Cys648 and Cys761 form a disulfide bridge. A glycan (N-linked (GlcNAc...) asparagine) is linked at Asn684. Active-site charge relay system residues include Asp707 and His739.

Belongs to the peptidase S9B family. DPPIV subfamily. Monomer. Homodimer. Heterodimer with Seprase (FAP). Requires homodimerization for optimal dipeptidyl peptidase activity and T-cell costimulation. Found in a membrane raft complex, at least composed of BCL10, CARD11, DPP4 and IKBKB. Associates with collagen. Interacts with PTPRC; the interaction is enhanced in an interleukin-12-dependent manner in activated lymphocytes. Interacts (extracellular domain) with ADA; does not inhibit its dipeptidyl peptidase activity. Interacts with CAV1 (via the N-terminus); the interaction is direct. Interacts (via cytoplasmic tail) with CARD11 (via PDZ domain); its homodimerization is necessary for interaction with CARD11. Interacts with IGF2R; the interaction is direct. Interacts with GPC3. In terms of processing, the soluble form (Dipeptidyl peptidase 4 soluble form also named SDPP) derives from the membrane form (Dipeptidyl peptidase 4 membrane form also named MDPP) by proteolytic processing. Post-translationally, N- and O-Glycosylated. Phosphorylated. Mannose 6-phosphate residues in the carbohydrate moiety are necessary for interaction with IGF2R in activated T-cells. Mannose 6-phosphorylation is induced during T-cell activation.

The protein resides in the secreted. The protein localises to the cell membrane. It localises to the apical cell membrane. Its subcellular location is the cell projection. It is found in the invadopodium membrane. The protein resides in the lamellipodium membrane. The protein localises to the cell junction. It localises to the membrane raft. The catalysed reaction is Release of an N-terminal dipeptide, Xaa-Yaa-|-Zaa-, from a polypeptide, preferentially when Yaa is Pro, provided Zaa is neither Pro nor hydroxyproline.. With respect to regulation, inhibited by GPC3 and diprotin A. In terms of biological role, cell surface glycoprotein receptor involved in the costimulatory signal essential for T-cell receptor (TCR)-mediated T-cell activation. Acts as a positive regulator of T-cell coactivation, by binding at least ADA, CAV1, IGF2R, and PTPRC. Its binding to CAV1 and CARD11 induces T-cell proliferation and NF-kappa-B activation in a T-cell receptor/CD3-dependent manner. Its interaction with ADA also regulates lymphocyte-epithelial cell adhesion. In association with FAP is involved in the pericellular proteolysis of the extracellular matrix (ECM), the migration and invasion of endothelial cells into the ECM. May be involved in the promotion of lymphatic endothelial cells adhesion, migration and tube formation. When overexpressed, enhanced cell proliferation, a process inhibited by GPC3. Also acts as a serine exopeptidase with a dipeptidyl peptidase activity that regulates various physiological processes by cleaving peptides in the circulation, including many chemokines, mitogenic growth factors, neuropeptides and peptide hormones. Removes N-terminal dipeptides sequentially from polypeptides having unsubstituted N-termini provided that the penultimate residue is proline. The protein is Dipeptidyl peptidase 4 (DPP4) of Felis catus (Cat).